The chain runs to 897 residues: DNA mismatch repair protein MutS (897 aa).

654-661 (GPNMAGKS) is a binding site for ATP.

Belongs to the DNA mismatch repair MutS family.

Its function is as follows. This protein is involved in the repair of mismatches in DNA. It is possible that it carries out the mismatch recognition step. This protein has a weak ATPase activity. This Maricaulis maris (strain MCS10) (Caulobacter maris) protein is DNA mismatch repair protein MutS.